A 303-amino-acid chain; its full sequence is ATP synthase gamma chain (303 aa).

It belongs to the ATPase gamma chain family. F-type ATPases have 2 components, CF(1) - the catalytic core - and CF(0) - the membrane proton channel. CF(1) has five subunits: alpha(3), beta(3), gamma(1), delta(1), epsilon(1). CF(0) has three main subunits: a, b and c.

It is found in the cell inner membrane. In terms of biological role, produces ATP from ADP in the presence of a proton gradient across the membrane. The gamma chain is believed to be important in regulating ATPase activity and the flow of protons through the CF(0) complex. This is ATP synthase gamma chain from Bartonella quintana (strain Toulouse) (Rochalimaea quintana).